The chain runs to 220 residues: MSNLKLDVQTADGKTNGTVELPAELFDTEASIALMHQVVNAQLAAARQGTHKTKTRGEVRGGGRKPFRQKGTGRARQGSIRAPHYTGGGTVHGPVPRDYSQRTPKRMIKAALYGALSDRARNERIHVIEELVPGQTPSTKQAKAFIERLTDRKNVLLVIGREDINARRSANNLPNVQILDAGQLNTYDVLYSDDVVFSVEALHTFVERATGAAEEAKEEK.

Residues 45–102 are disordered; it reads AARQGTHKTKTRGEVRGGGRKPFRQKGTGRARQGSIRAPHYTGGGTVHGPVPRDYSQR. Positions 62–73 are enriched in basic residues; the sequence is GGRKPFRQKGTG.

Belongs to the universal ribosomal protein uL4 family. Part of the 50S ribosomal subunit.

Functionally, one of the primary rRNA binding proteins, this protein initially binds near the 5'-end of the 23S rRNA. It is important during the early stages of 50S assembly. It makes multiple contacts with different domains of the 23S rRNA in the assembled 50S subunit and ribosome. Its function is as follows. Forms part of the polypeptide exit tunnel. In Corynebacterium aurimucosum (strain ATCC 700975 / DSM 44827 / CIP 107346 / CN-1) (Corynebacterium nigricans), this protein is Large ribosomal subunit protein uL4.